A 171-amino-acid chain; its full sequence is Disulfide bond formation protein B (171 aa).

Residues 1-10 (MQRLLTYRAL) lie on the Cytoplasmic side of the membrane. A helical membrane pass occupies residues 11-27 (NFILFIASVVAMLFAII). The Periplasmic portion of the chain corresponds to 28–46 (FLQNYKGLEPCPLCIFQRI). Cysteine 38 and cysteine 41 form a disulfide bridge. Residues 47 to 63 (GLMVMGGFSLIAAVGHP) form a helical membrane-spanning segment. Over 64 to 70 (KKMGMQL) the chain is Cytoplasmic. The helical transmembrane segment at 71–88 (LLWIGSMAGILWSAGVAA) threads the bilayer. The Periplasmic segment spans residues 89–145 (RHVWIQHLPADQVPACGPGLDYFLEALPMKQVINQVLSGSGECAEISWRFLGLSIPE). Residues cysteine 104 and cysteine 131 are joined by a disulfide bond. A helical transmembrane segment spans residues 146-164 (QALILFTALILVNLLVLWR). Topologically, residues 165 to 171 (IISKRTA) are cytoplasmic.

It belongs to the DsbB family.

Its subcellular location is the cell inner membrane. In terms of biological role, required for disulfide bond formation in some periplasmic proteins. Acts by oxidizing the DsbA protein. The protein is Disulfide bond formation protein B of Psychrobacter sp. (strain PRwf-1).